Here is a 181-residue protein sequence, read N- to C-terminus: Large ribosomal subunit protein uL5 (181 aa).

This sequence belongs to the universal ribosomal protein uL5 family. As to quaternary structure, part of the 50S ribosomal subunit; part of the 5S rRNA/L5/L18/L25 subcomplex. Contacts the 5S rRNA and the P site tRNA. Forms a bridge to the 30S subunit in the 70S ribosome.

This is one of the proteins that bind and probably mediate the attachment of the 5S RNA into the large ribosomal subunit, where it forms part of the central protuberance. In the 70S ribosome it contacts protein S13 of the 30S subunit (bridge B1b), connecting the 2 subunits; this bridge is implicated in subunit movement. Contacts the P site tRNA; the 5S rRNA and some of its associated proteins might help stabilize positioning of ribosome-bound tRNAs. In Helicobacter pylori (strain Shi470), this protein is Large ribosomal subunit protein uL5.